We begin with the raw amino-acid sequence, 148 residues long: uncharacterized protein (148 aa).

3 helical membrane-spanning segments follow: residues 25 to 45 (FCTV…LLTA), 85 to 105 (IVRF…LLYL), and 118 to 138 (LAAT…WVFG).

The protein belongs to the GtrA family.

It is found in the cell membrane. This is an uncharacterized protein from Bacillus subtilis (strain 168).